Reading from the N-terminus, the 448-residue chain is B-cell lymphoma 3 protein homolog (448 aa).

Residues 1–54 (MPRCPAGAMDEGPVDLRTRPKGTPGAALPLRKRPLRPASPEPATTRSPAGPLDA) are disordered. Phosphoserine is present on Ser-39. 7 ANK repeats span residues 129 to 161 (DGDT…REVD), 166 to 195 (LRQT…SPMA), 199 to 228 (HGQT…SGSV), 236 to 265 (EGLT…DIDA), 270 to 299 (SGRS…NVNA), 303 to 332 (SGSS…DSGL), and 333 to 362 (KNCH…RAAS). Positions 356-448 (KASRAASGSQ…VPPSPAPGSS (93 aa)) are disordered. A compositionally biased stretch (polar residues) spans 361–376 (ASGSQPEPSPDQSATN). At Ser-369 the chain carries Phosphoserine. Positions 377-398 (SPESSSRLSSNGLQSSPSSSPS) are enriched in low complexity. Residues Ser-396 and Ser-400 each carry the phosphoserine; by GSK3 modification. Polar residues predominate over residues 411–423 (TPQNFFLPTTSTP). The span at 425 to 436 (FLPFPGVLRGPG) shows a compositional bias: low complexity. Positions 437–448 (RPVPPSPAPGSS) are enriched in pro residues.

As to quaternary structure, component of a complex consisting of the NF-kappa-B p52-p52 homodimer and BCL3. Component of a complex consisting of the NF-kappa-B p50-p50 homodimer and BCL3. Interacts with N4BP2, COPS5 and PIR. Interacts with CYLD. Polyubiquitinated. Ubiquitination via 'Lys-63'-linked ubiquitin chains is required for nuclear accumulation. Deubiquitinated by CYLD, which acts on 'Lys-63'-linked ubiquitin chains. Deubiquitination by CYLD prevents nuclear accumulation. In terms of processing, activated by phosphorylation.

The protein localises to the nucleus. It is found in the cytoplasm. The protein resides in the perinuclear region. Functionally, contributes to the regulation of transcriptional activation of NF-kappa-B target genes. In the cytoplasm, inhibits the nuclear translocation of the NF-kappa-B p50 subunit. In the nucleus, acts as a transcriptional activator that promotes transcription of NF-kappa-B target genes. Contributes to the regulation of cell proliferation. This chain is B-cell lymphoma 3 protein homolog (Bcl3), found in Mus musculus (Mouse).